Consider the following 180-residue polypeptide: uncharacterized protein (180 aa).

Over residues 114 to 136 (DKISESDSLPDEYKEYVVKHDSD) the composition is skewed to basic and acidic residues. The segment at 114-180 (DKISESDSLP…NFDNPDDNPK (67 aa)) is disordered. Positions 137 to 146 (NSDNDSDNSD) are enriched in acidic residues. The segment covering 147–173 (NDSNNSDNDSNNSDSDSDNSNDPNNFD) has biased composition (low complexity).

This is an uncharacterized protein from Acanthamoeba polyphaga (Amoeba).